Reading from the N-terminus, the 390-residue chain is Chorismate synthase 2 (390 aa).

Residues Arg-39 and Arg-45 each contribute to the NADP(+) site. Residues 132 to 134 (RSS), 253 to 254 (NA), Gly-298, 313 to 317 (KPIPT), and Arg-339 each bind FMN.

This sequence belongs to the chorismate synthase family. In terms of assembly, homotetramer. Requires FMNH2 as cofactor.

It carries out the reaction 5-O-(1-carboxyvinyl)-3-phosphoshikimate = chorismate + phosphate. It participates in metabolic intermediate biosynthesis; chorismate biosynthesis; chorismate from D-erythrose 4-phosphate and phosphoenolpyruvate: step 7/7. In terms of biological role, catalyzes the anti-1,4-elimination of the C-3 phosphate and the C-6 proR hydrogen from 5-enolpyruvylshikimate-3-phosphate (EPSP) to yield chorismate, which is the branch point compound that serves as the starting substrate for the three terminal pathways of aromatic amino acid biosynthesis. This reaction introduces a second double bond into the aromatic ring system. The chain is Chorismate synthase 2 from Bacillus thuringiensis (strain Al Hakam).